Reading from the N-terminus, the 64-residue chain is Large ribosomal subunit protein uL29 (64 aa).

The protein belongs to the universal ribosomal protein uL29 family.

The protein is Large ribosomal subunit protein uL29 of Legionella pneumophila (strain Lens).